The sequence spans 474 residues: Iroquois-class homeodomain protein irx-5 (474 aa).

The homeobox; TALE-type DNA-binding region spans 109-171; sequence DPAYRKNASR…NARRRLKKEN (63 aa). Disordered stretches follow at residues 174-222, 252-294, and 453-474; these read TWTP…SPDG, ERNG…IQQL, and SQSQ…MSSI. The segment covering 182–199 has biased composition (acidic residues); sequence EDEDDDENIDLEKNEEDD. A compositionally biased stretch (pro residues) spans 263–273; the sequence is PPTPPLCPPDQ.

Belongs to the TALE/IRO homeobox family. Early in gastrulation, expressed in cells beneath the blastopore lip. Subsequently expressed in the neural plate in overlapping patterns with other irx members, which all share an anterior border of expression. At the time of neural tube closure (stage 19) in regions of the midbrain, hindbrain, neural tube and optic vesicle, where expression continues during tailbud stages. In stage 34, expressed throughout the eye retina. Does not appear to be expressed in the developing heart or pronephros.

The protein resides in the nucleus. Acts partially redundantly with other irx members in neural patterning. Required for formation of the posterior forebrain, midbrain, hindbrain, and to a lesser extent, spinal cord. Patterns the neuroectoderm in both the anterior/posterior and dorsal/ventral axes. Does not appear to play a role in pronephros kidney development. Involved in craniofacial and gonadal development. Modulates the migration of progenitor cell populations in branchial arches and gonads by repressing CXCL12. The chain is Iroquois-class homeodomain protein irx-5 (irx5) from Xenopus laevis (African clawed frog).